The following is a 157-amino-acid chain: MLVLLAGIFVVHIATVIMLFVSTIANVWLVSNTVDASVGLWKNCTNISCSDSLSYASEDALKTVQAFMILSIIFCVIALLVFVFQLFTMEKGNRFFLSGATTLVCWLCILVGVSIYTSHYANRDGTQYHHGYSYILGWICFCFSFIIGVLYLVLRKK.

The helical transmembrane segment at 1-21 (MLVLLAGIFVVHIATVIMLFV) threads the bilayer. N-linked (GlcNAc...) asparagine glycans are attached at residues asparagine 43 and asparagine 46. The next 3 membrane-spanning stretches (helical) occupy residues 67–87 (FMIL…FQLF), 95–115 (FFLS…GVSI), and 134–154 (YILG…YLVL).

The protein belongs to the PMP-22/EMP/MP20 family.

The protein resides in the membrane. The chain is Epithelial membrane protein 1 (EMP1) from Homo sapiens (Human).